Here is a 152-residue protein sequence, read N- to C-terminus: MESWLFLIGIFIVALLGKNQSLIIASIVVLFLKLIPYSDKIFPLLNKQGINWGVTIISITILVPIATGKIGFMDLVNSFKSPVGWIAVACGILVSLLSYQGVGFLSASPEVTVALVMGTIIGVVFMNGIAAGPIIASGIAYLIIQLLQIQIK.

Transmembrane regions (helical) follow at residues 4-24 (WLFLIGIFIVALLGKNQSLII), 52-72 (WGVTIISITILVPIATGKIGF), 85-105 (WIAVACGILVSLLSYQGVGFL), and 115-135 (LVMGTIIGVVFMNGIAAGPII).

It belongs to the UPF0756 family.

It is found in the cell membrane. This Pediococcus pentosaceus (strain ATCC 25745 / CCUG 21536 / LMG 10740 / 183-1w) protein is UPF0756 membrane protein PEPE_1090.